Reading from the N-terminus, the 963-residue chain is Glycine dehydrogenase (decarboxylating) (963 aa).

N6-(pyridoxal phosphate)lysine is present on lysine 707.

This sequence belongs to the GcvP family. The glycine cleavage system is composed of four proteins: P, T, L and H. It depends on pyridoxal 5'-phosphate as a cofactor.

The catalysed reaction is N(6)-[(R)-lipoyl]-L-lysyl-[glycine-cleavage complex H protein] + glycine + H(+) = N(6)-[(R)-S(8)-aminomethyldihydrolipoyl]-L-lysyl-[glycine-cleavage complex H protein] + CO2. Functionally, the glycine cleavage system catalyzes the degradation of glycine. The P protein binds the alpha-amino group of glycine through its pyridoxal phosphate cofactor; CO(2) is released and the remaining methylamine moiety is then transferred to the lipoamide cofactor of the H protein. This Dechloromonas aromatica (strain RCB) protein is Glycine dehydrogenase (decarboxylating).